Here is a 215-residue protein sequence, read N- to C-terminus: Cytochrome b6 (215 aa).

The helical transmembrane segment at 32-52 (LFYCLGGITLTCFLIQVATGF) threads the bilayer. Heme c is bound at residue cysteine 35. The heme b site is built by histidine 86 and histidine 100. The next 3 helical transmembrane spans lie at 90–110 (ASMM…TGGF), 116–136 (STWV…VTGY), and 186–206 (LHTF…FLMI). Heme b is bound by residues histidine 187 and histidine 202.

Belongs to the cytochrome b family. PetB subfamily. The 4 large subunits of the cytochrome b6-f complex are cytochrome b6, subunit IV (17 kDa polypeptide, PetD), cytochrome f and the Rieske protein, while the 4 small subunits are PetG, PetL, PetM and PetN. The complex functions as a dimer. Heme b is required as a cofactor. Requires heme c as cofactor.

The protein resides in the plastid. It is found in the chloroplast thylakoid membrane. Component of the cytochrome b6-f complex, which mediates electron transfer between photosystem II (PSII) and photosystem I (PSI), cyclic electron flow around PSI, and state transitions. In Bigelowiella natans (Pedinomonas minutissima), this protein is Cytochrome b6.